Consider the following 474-residue polypeptide: tRNA-2-methylthio-N(6)-dimethylallyladenosine synthase (474 aa).

The region spanning 3 to 120 is the MTTase N-terminal domain; sequence KKLHIKTWGC…LPEMIEQVRR (118 aa). 6 residues coordinate [4Fe-4S] cluster: Cys-12, Cys-49, Cys-83, Cys-157, Cys-161, and Cys-164. The Radical SAM core domain occupies 143–375; that stretch reads RAEGPTAFVS…QDRITQQAMR (233 aa). The TRAM domain maps to 378-441; sequence RHMMGTVQRI…TNSLRGVFIR (64 aa).

This sequence belongs to the methylthiotransferase family. MiaB subfamily. Monomer. It depends on [4Fe-4S] cluster as a cofactor.

The protein localises to the cytoplasm. The catalysed reaction is N(6)-dimethylallyladenosine(37) in tRNA + (sulfur carrier)-SH + AH2 + 2 S-adenosyl-L-methionine = 2-methylsulfanyl-N(6)-dimethylallyladenosine(37) in tRNA + (sulfur carrier)-H + 5'-deoxyadenosine + L-methionine + A + S-adenosyl-L-homocysteine + 2 H(+). Its function is as follows. Catalyzes the methylthiolation of N6-(dimethylallyl)adenosine (i(6)A), leading to the formation of 2-methylthio-N6-(dimethylallyl)adenosine (ms(2)i(6)A) at position 37 in tRNAs that read codons beginning with uridine. The polypeptide is tRNA-2-methylthio-N(6)-dimethylallyladenosine synthase (Shewanella baltica (strain OS155 / ATCC BAA-1091)).